The sequence spans 102 residues: ATP-dependent Clp protease adapter protein ClpS (102 aa).

Belongs to the ClpS family. As to quaternary structure, binds to the N-terminal domain of the chaperone ClpA.

In terms of biological role, involved in the modulation of the specificity of the ClpAP-mediated ATP-dependent protein degradation. The polypeptide is ATP-dependent Clp protease adapter protein ClpS (Shewanella baltica (strain OS155 / ATCC BAA-1091)).